The following is a 336-amino-acid chain: tRNA N6-adenosine threonylcarbamoyltransferase (336 aa).

2 residues coordinate Fe cation: His-111 and His-115. Residues 134 to 138, Asp-167, Gly-180, Asp-184, and Asn-272 each bind substrate; that span reads VVSGG. Asp-300 contributes to the Fe cation binding site.

Belongs to the KAE1 / TsaD family. The cofactor is Fe(2+).

The protein resides in the cytoplasm. The catalysed reaction is L-threonylcarbamoyladenylate + adenosine(37) in tRNA = N(6)-L-threonylcarbamoyladenosine(37) in tRNA + AMP + H(+). Required for the formation of a threonylcarbamoyl group on adenosine at position 37 (t(6)A37) in tRNAs that read codons beginning with adenine. Is involved in the transfer of the threonylcarbamoyl moiety of threonylcarbamoyl-AMP (TC-AMP) to the N6 group of A37, together with TsaE and TsaB. TsaD likely plays a direct catalytic role in this reaction. This is tRNA N6-adenosine threonylcarbamoyltransferase from Caldicellulosiruptor bescii (strain ATCC BAA-1888 / DSM 6725 / KCTC 15123 / Z-1320) (Anaerocellum thermophilum).